Consider the following 210-residue polypeptide: 3-hexulose-6-phosphate synthase 3 (210 aa).

The protein belongs to the HPS/KGPDC family. HPS subfamily.

It catalyses the reaction D-ribulose 5-phosphate + formaldehyde = D-arabino-hex-3-ulose 6-phosphate. It participates in one-carbon metabolism; formaldehyde assimilation via RuMP pathway; D-fructose 6-phosphate from D-ribulose 5-phosphate and formaldehyde: step 1/2. In terms of biological role, catalyzes the condensation of ribulose 5-phosphate with formaldehyde to form 3-hexulose 6-phosphate. This is 3-hexulose-6-phosphate synthase 3 from Staphylococcus saprophyticus subsp. saprophyticus (strain ATCC 15305 / DSM 20229 / NCIMB 8711 / NCTC 7292 / S-41).